The chain runs to 130 residues: Small ribosomal subunit protein uS11 (130 aa).

Belongs to the universal ribosomal protein uS11 family. Part of the 30S ribosomal subunit. Interacts with proteins S7 and S18. Binds to IF-3.

Located on the platform of the 30S subunit, it bridges several disparate RNA helices of the 16S rRNA. Forms part of the Shine-Dalgarno cleft in the 70S ribosome. This Moorella thermoacetica (strain ATCC 39073 / JCM 9320) protein is Small ribosomal subunit protein uS11.